A 262-amino-acid chain; its full sequence is MRFGLNIDHIVTLREVRKTYEPEILEALFIAKNTHKVDLITIHLREDRRHIQNEDVLRLLEISPLPINIECSINAAITDFLCSLKNKPSKVTIVPENRNEVTTEGGLDCSLKGLEEVIRAYHNKGIEVSLFIDPLKDALHFAREHQVKQVEFHTGVYANLHNALYSNANNQIHAISALKDKSPKELKEELHNAFLQLRRMSKEAFFMGITACAGHGLNYTNVKELLKIPSLRELNIGHSVVSKAVLVGLEKAILEMAQLIKR.

Asparagine 6 is a 3-amino-2-oxopropyl phosphate binding site. 8-9 is a binding site for 1-deoxy-D-xylulose 5-phosphate; it reads DH. Residue arginine 17 participates in 3-amino-2-oxopropyl phosphate binding. Histidine 43 serves as the catalytic Proton acceptor. Positions 45 and 50 each coordinate 1-deoxy-D-xylulose 5-phosphate. Residue glutamate 70 is the Proton acceptor of the active site. Position 102 (threonine 102) interacts with 1-deoxy-D-xylulose 5-phosphate. Histidine 215 functions as the Proton donor in the catalytic mechanism. 3-amino-2-oxopropyl phosphate-binding positions include glycine 216 and 237–238; that span reads GH.

It belongs to the PNP synthase family. Homooctamer; tetramer of dimers.

It is found in the cytoplasm. It carries out the reaction 3-amino-2-oxopropyl phosphate + 1-deoxy-D-xylulose 5-phosphate = pyridoxine 5'-phosphate + phosphate + 2 H2O + H(+). Its pathway is cofactor biosynthesis; pyridoxine 5'-phosphate biosynthesis; pyridoxine 5'-phosphate from D-erythrose 4-phosphate: step 5/5. In terms of biological role, catalyzes the complicated ring closure reaction between the two acyclic compounds 1-deoxy-D-xylulose-5-phosphate (DXP) and 3-amino-2-oxopropyl phosphate (1-amino-acetone-3-phosphate or AAP) to form pyridoxine 5'-phosphate (PNP) and inorganic phosphate. This is Pyridoxine 5'-phosphate synthase from Helicobacter pylori (strain G27).